A 211-amino-acid chain; its full sequence is Ribosomal RNA small subunit methyltransferase G (211 aa).

Residues glycine 76, leucine 81, 127 to 128 (VE), and arginine 142 contribute to the S-adenosyl-L-methionine site.

Belongs to the methyltransferase superfamily. RNA methyltransferase RsmG family.

It is found in the cytoplasm. It catalyses the reaction guanosine(527) in 16S rRNA + S-adenosyl-L-methionine = N(7)-methylguanosine(527) in 16S rRNA + S-adenosyl-L-homocysteine. Its function is as follows. Specifically methylates the N7 position of guanine in position 527 of 16S rRNA. The sequence is that of Ribosomal RNA small subunit methyltransferase G from Vibrio campbellii (strain ATCC BAA-1116).